The primary structure comprises 279 residues: BEN domain-containing protein 6 (279 aa).

Polar residues predominate over residues 1-15 (MQKIVQTDEITNTQA). 2 disordered regions span residues 1 to 65 (MQKI…LAEL) and 134 to 172 (RATN…TDEK). Residues 62–99 (LAELSKEELCAKIKSLKEKLTNTRKENSRLRQSLVMLQ) adopt a coiled-coil conformation. Residues 134–148 (RATNNSSPDSFASTC) are compositionally biased toward polar residues. A compositionally biased stretch (basic and acidic residues) spans 162 to 172 (KPEEEHQTDEK). The region spanning 171–271 (EKQFQIEKWQ…NCTKKPNLSK (101 aa)) is the BEN domain.

In terms of assembly, interacts (via BEN domain) with RBPJ.

It localises to the nucleus. Its function is as follows. Acts as a corepressor of recombining binding protein suppressor hairless (RBPJ) and inhibits Notch signaling in neural stem cells, thereby opposing their self-renewal and promoting neurogenesis. The chain is BEN domain-containing protein 6 (BEND6) from Homo sapiens (Human).